We begin with the raw amino-acid sequence, 386 residues long: LL-diaminopimelate aminotransferase (386 aa).

2 residues coordinate substrate: Tyr-13 and Gly-38. Residues Tyr-67, 101–102, Tyr-126, Asn-176, Tyr-207, and 235–237 contribute to the pyridoxal 5'-phosphate site; these read SK and SLS. Lys-102, Tyr-126, and Asn-176 together coordinate substrate. Lys-238 carries the N6-(pyridoxal phosphate)lysine modification. Arg-246 lines the pyridoxal 5'-phosphate pocket. Arg-364 is a substrate binding site.

It belongs to the class-I pyridoxal-phosphate-dependent aminotransferase family. LL-diaminopimelate aminotransferase subfamily. As to quaternary structure, homodimer. Pyridoxal 5'-phosphate is required as a cofactor.

The enzyme catalyses (2S,6S)-2,6-diaminopimelate + 2-oxoglutarate = (S)-2,3,4,5-tetrahydrodipicolinate + L-glutamate + H2O + H(+). It participates in amino-acid biosynthesis; L-lysine biosynthesis via DAP pathway; LL-2,6-diaminopimelate from (S)-tetrahydrodipicolinate (aminotransferase route): step 1/1. Involved in the synthesis of meso-diaminopimelate (m-DAP or DL-DAP), required for both lysine and peptidoglycan biosynthesis. Catalyzes the direct conversion of tetrahydrodipicolinate to LL-diaminopimelate. This Natranaerobius thermophilus (strain ATCC BAA-1301 / DSM 18059 / JW/NM-WN-LF) protein is LL-diaminopimelate aminotransferase.